The following is a 184-amino-acid chain: NADH-quinone oxidoreductase subunit B (184 aa).

4 residues coordinate [4Fe-4S] cluster: Cys-37, Cys-38, Cys-103, and Cys-132.

It belongs to the complex I 20 kDa subunit family. In terms of assembly, NDH-1 is composed of 14 different subunits. Subunits NuoB, C, D, E, F, and G constitute the peripheral sector of the complex. [4Fe-4S] cluster is required as a cofactor.

It localises to the cell membrane. The catalysed reaction is a quinone + NADH + 5 H(+)(in) = a quinol + NAD(+) + 4 H(+)(out). Its function is as follows. NDH-1 shuttles electrons from NADH, via FMN and iron-sulfur (Fe-S) centers, to quinones in the respiratory chain. The immediate electron acceptor for the enzyme in this species is believed to be a menaquinone. Couples the redox reaction to proton translocation (for every two electrons transferred, four hydrogen ions are translocated across the cytoplasmic membrane), and thus conserves the redox energy in a proton gradient. This chain is NADH-quinone oxidoreductase subunit B, found in Mycolicibacterium gilvum (strain PYR-GCK) (Mycobacterium gilvum (strain PYR-GCK)).